Reading from the N-terminus, the 457-residue chain is Acetylcholine receptor subunit alpha (457 aa).

Positions 1–20 (MEPRPLLLLLGLCSAGLVLG) are cleaved as a signal peptide. At 21–230 (SEHETRLVAK…ITYHFVMQRL (210 aa)) the chain is on the extracellular side. Disulfide bonds link Cys148/Cys162 and Cys212/Cys213. Asn161 carries an N-linked (GlcNAc...) asparagine glycan. Helical transmembrane passes span 231–255 (PLYFIVNVIIPCLLFSFLTGLVFYL), 263–281 (MTLSISVLLSLTVFLLVIV), and 297–316 (YMLFTMVFVIASIIITVIVI). The Cytoplasmic segment spans residues 317-428 (NTHHRSPSTH…WKYVAMVMDH (112 aa)). Residues 429-447 (ILLAVFMLVCIIGTLAVFA) traverse the membrane as a helical segment.

The protein belongs to the ligand-gated ion channel (TC 1.A.9) family. Acetylcholine receptor (TC 1.A.9.1) subfamily. Alpha-1/CHRNA1 sub-subfamily. As to quaternary structure, one of the alpha chains that assemble within the acetylcholine receptor, a pentamer of two alpha chains, a beta, a delta, and a gamma (in immature muscle) or epsilon (in mature muscle) chains. The muscle heteropentamer composed of alpha-1, beta-1, delta, epsilon subunits interacts with the alpha-conotoxin ImII.

It localises to the postsynaptic cell membrane. The protein resides in the cell membrane. The enzyme catalyses K(+)(in) = K(+)(out). It catalyses the reaction Na(+)(in) = Na(+)(out). Functionally, upon acetylcholine binding, the AChR responds by an extensive change in conformation that affects all subunits and leads to opening of an ion-conducting channel across the plasma membrane. The chain is Acetylcholine receptor subunit alpha (CHRNA1) from Bos taurus (Bovine).